Reading from the N-terminus, the 559-residue chain is Polypeptide N-acetylgalactosaminyltransferase 1 (559 aa).

The Cytoplasmic segment spans residues 1–8 (MRKFAYCK). Residues 9 to 28 (VVLATSLIWVLLDMFLLLYF) form a helical; Signal-anchor for type II membrane protein membrane-spanning segment. At 29–559 (SECNKCDEKK…LRNVTLPEIF (531 aa)) the chain is on the lumenal side. A disordered region spans residues 45 to 65 (GDVLEPVQKPHEGPGEMGKPV). N-linked (GlcNAc...) asparagine glycosylation is present at asparagine 95. Cystine bridges form between cysteine 106/cysteine 339, cysteine 330/cysteine 408, cysteine 442/cysteine 459, cysteine 482/cysteine 497, and cysteine 523/cysteine 540. The interval 115 to 225 (LPTTSVVIVF…VGWLEPLLAR (111 aa)) is catalytic subdomain A. Aspartate 156 and arginine 186 together coordinate substrate. 2 residues coordinate Mn(2+): aspartate 209 and histidine 211. The tract at residues 285–347 (PVRTPTMAGG…TCSHVGHVFR (63 aa)) is catalytic subdomain B. Tryptophan 316 is a binding site for substrate. Residue histidine 344 participates in Mn(2+) binding. Residues arginine 347 and tyrosine 352 each coordinate substrate. One can recognise a Ricin B-type lectin domain in the interval 429–551 (FSLGEIRNVE…GSRSQQWLLR (123 aa)). The N-linked (GlcNAc...) asparagine glycan is linked to asparagine 552.

The protein belongs to the glycosyltransferase 2 family. GalNAc-T subfamily. Mn(2+) is required as a cofactor. In terms of tissue distribution, widely expressed. Expressed in all tissues tested.

It localises to the golgi apparatus. Its subcellular location is the golgi stack membrane. The protein localises to the secreted. The catalysed reaction is L-seryl-[protein] + UDP-N-acetyl-alpha-D-galactosamine = a 3-O-[N-acetyl-alpha-D-galactosaminyl]-L-seryl-[protein] + UDP + H(+). The enzyme catalyses L-threonyl-[protein] + UDP-N-acetyl-alpha-D-galactosamine = a 3-O-[N-acetyl-alpha-D-galactosaminyl]-L-threonyl-[protein] + UDP + H(+). It functions in the pathway protein modification; protein glycosylation. Its function is as follows. Catalyzes the initial reaction in O-linked oligosaccharide biosynthesis, the transfer of an N-acetyl-D-galactosamine residue to a serine or threonine residue on the protein receptor. Has a broad spectrum of substrates such as apomucin-, MUC5AC-, MUC1- and MUC2-derived peptides. This Homo sapiens (Human) protein is Polypeptide N-acetylgalactosaminyltransferase 1.